A 111-amino-acid chain; its full sequence is Large ribosomal subunit protein uL22 (111 aa).

The protein belongs to the universal ribosomal protein uL22 family. As to quaternary structure, part of the 50S ribosomal subunit.

This protein binds specifically to 23S rRNA; its binding is stimulated by other ribosomal proteins, e.g. L4, L17, and L20. It is important during the early stages of 50S assembly. It makes multiple contacts with different domains of the 23S rRNA in the assembled 50S subunit and ribosome. Functionally, the globular domain of the protein is located near the polypeptide exit tunnel on the outside of the subunit, while an extended beta-hairpin is found that lines the wall of the exit tunnel in the center of the 70S ribosome. This chain is Large ribosomal subunit protein uL22, found in Chlamydia trachomatis serovar L2b (strain UCH-1/proctitis).